The primary structure comprises 224 residues: dTTP/UTP pyrophosphatase (224 aa).

D77 functions as the Proton acceptor in the catalytic mechanism.

This sequence belongs to the Maf family. YhdE subfamily. A divalent metal cation is required as a cofactor.

The protein resides in the cytoplasm. It carries out the reaction dTTP + H2O = dTMP + diphosphate + H(+). The enzyme catalyses UTP + H2O = UMP + diphosphate + H(+). In terms of biological role, nucleoside triphosphate pyrophosphatase that hydrolyzes dTTP and UTP. May have a dual role in cell division arrest and in preventing the incorporation of modified nucleotides into cellular nucleic acids. This is dTTP/UTP pyrophosphatase from Dehalococcoides mccartyi (strain CBDB1).